A 463-amino-acid chain; its full sequence is Mitochondrial dynamics protein MID51 (463 aa).

At 1 to 23 the chain is on the mitochondrial intermembrane side; that stretch reads MAGAGERKGKKDDNGIGTAIDFV. A helical transmembrane segment spans residues 24 to 46; that stretch reads LSNARLVLGVGGAAMLGIATLAV. At 47–463 the chain is on the cytoplasmic side; that stretch reads KRMYDRAISA…LSEPEVLLQT (417 aa). Residues 49-195 form a dimerization region; the sequence is MYDRAISAPT…LSGSLYDDLQ (147 aa). Phosphoserine occurs at positions 55, 59, 79, and 94. The segment at 57–77 is disordered; the sequence is PTSPTRLSHSGKRSWEEPNWM. The segment at 160–169 is important for interaction with DNM1L; that stretch reads AAVDICAELR. Ser-187, Ser-189, and His-201 together coordinate ADP. An important for interaction with DNM1L region spans residues 234–243; the sequence is RRENPEYFPR. Residues Ser-340, Arg-342, and Lys-368 each contribute to the ADP site.

The protein belongs to the MID49/MID51 family. Homodimer. Interacts with DNM1L.

It localises to the mitochondrion outer membrane. Mitochondrial outer membrane protein which regulates mitochondrial fission/fusion dynamics. Promotes the recruitment and association of the fission mediator dynamin-related protein 1 (DNM1L) to the mitochondrial surface independently of the mitochondrial fission FIS1 and MFF proteins. Regulates DNM1L GTPase activity and DNM1L oligomerization. Binds ADP and can also bind GDP, although with lower affinity. Does not bind CDP, UDP, ATP, AMP or GTP. Inhibits DNM1L GTPase activity in the absence of bound ADP. Requires ADP to stimulate DNM1L GTPase activity and the assembly of DNM1L into long, oligomeric tubules with a spiral pattern, as opposed to the ring-like DNM1L oligomers observed in the absence of bound ADP. Does not require ADP for its function in recruiting DNM1L. This is Mitochondrial dynamics protein MID51 (Mief1) from Mus musculus (Mouse).